Consider the following 129-residue polypeptide: MGPRGLQLLAVLLALGLCAPAGAQKPSACQCSRIEASHRKNCGFPGISASECFNTGCCFDSRVPNVPWCFHPLPKQESEQCVMEVAARKNCGYPGISPQECASRNCCFSDTIRNVPWCFFPILNQDCHY.

Residues 1–23 (MGPRGLQLLAVLLALGLCAPAGA) form the signal peptide. Glutamine 24 bears the Pyrrolidone carboxylic acid mark. 2 consecutive P-type domains span residues 29–73 (CQCS…FHPL) and 79–122 (EQCV…FFPI). Disulfide bonds link cysteine 29–cysteine 127, cysteine 31–cysteine 58, cysteine 42–cysteine 57, cysteine 52–cysteine 69, cysteine 81–cysteine 107, cysteine 91–cysteine 106, and cysteine 101–cysteine 118.

It is found in the secreted. Functionally, inhibits gastrointestinal motility and gastric acid secretion. Could function as a structural component of gastric mucus, possibly by stabilizing glycoproteins in the mucus gel through interactions with carbohydrate side chains. The polypeptide is Trefoil factor 2 (TFF2) (Canis lupus familiaris (Dog)).